The following is a 314-amino-acid chain: tRNA dimethylallyltransferase (314 aa).

ATP is bound at residue G14–T21. Residue T16 to T21 coordinates substrate. 3 interaction with substrate tRNA regions span residues D39 to Q42, Q163 to R167, and R245 to R250.

This sequence belongs to the IPP transferase family. As to quaternary structure, monomer. Requires Mg(2+) as cofactor.

It catalyses the reaction adenosine(37) in tRNA + dimethylallyl diphosphate = N(6)-dimethylallyladenosine(37) in tRNA + diphosphate. Functionally, catalyzes the transfer of a dimethylallyl group onto the adenine at position 37 in tRNAs that read codons beginning with uridine, leading to the formation of N6-(dimethylallyl)adenosine (i(6)A). In Dechloromonas aromatica (strain RCB), this protein is tRNA dimethylallyltransferase.